The primary structure comprises 211 residues: Outer-membrane lipoprotein carrier protein (211 aa).

The signal sequence occupies residues 1–24 (MNTIKILIGLLGIFLFSLSGIVSA).

The protein belongs to the LolA family. In terms of assembly, monomer.

It is found in the periplasm. Participates in the translocation of lipoproteins from the inner membrane to the outer membrane. Only forms a complex with a lipoprotein if the residue after the N-terminal Cys is not an aspartate (The Asp acts as a targeting signal to indicate that the lipoprotein should stay in the inner membrane). In Coxiella burnetii (strain CbuK_Q154) (Coxiella burnetii (strain Q154)), this protein is Outer-membrane lipoprotein carrier protein.